The following is a 160-amino-acid chain: MPVRAQRIQHVMQDTIINFYSTSDDYGDFSNFAAWPIKVDGKTWPTSEHYFQAQKFLDEKYREEIRRVSSPMVAARMGRDRSKPLRKNWESVKEQVMRKALRAKFEQHAELRALLLATAPAKLVEHTENDAYWGDGGHGKGKNRLGYLLMELREQLAIEK.

This sequence belongs to the YbiA family.

It carries out the reaction 2,5-diamino-6-hydroxy-4-(5-phosphoribosylamino)-pyrimidine + H2O = 2,5,6-triamino-4-hydroxypyrimidine + D-ribose 5-phosphate. The enzyme catalyses 5-amino-6-(5-phospho-D-ribosylamino)uracil + H2O = 5,6-diaminouracil + D-ribose 5-phosphate. Catalyzes the hydrolysis of the N-glycosidic bond in the first two intermediates of riboflavin biosynthesis, which are highly reactive metabolites, yielding relatively innocuous products. Thus, can divert a surplus of harmful intermediates into relatively harmless products and pre-empt the damage these intermediates would otherwise do. Helps maintain flavin levels. May act on other substrates in vivo. Has no activity against GTP, nucleoside monophosphates or ADP-ribose. Is Required for swarming motility. This chain is N-glycosidase YbiA (ybiA), found in Escherichia coli (strain K12).